A 354-amino-acid chain; its full sequence is Guanine nucleotide-binding protein G(i) subunit alpha-3 (354 aa).

G2 carries N-myristoyl glycine lipidation. C3 is lipidated: S-palmitoyl cysteine. In terms of domain architecture, G-alpha spans 32 to 354; that stretch reads KEVKLLLLGA…KNNLKECGLY (323 aa). The tract at residues 35–48 is G1 motif; the sequence is KLLLLGAGESGKST. Residues G42, E43, S44, G45, K46, S47, T48, D150, S151, L175, R176, T177, R178, V179, K180, T181, V201, and G203 each coordinate GTP. Positions 43, 44, 45, 46, 47, and 48 each coordinate GDP. Residue S47 participates in Mg(2+) binding. The GDP site is built by S151, L175, R176, T177, and R178. The interval 173–181 is G2 motif; that stretch reads DVLRTRVKT. R178 carries the post-translational modification ADP-ribosylarginine; by cholera toxin. T181 provides a ligand contact to Mg(2+). Residues 196–205 form a G3 motif region; the sequence is FKMFDVGGQR. Q204 is subject to Deamidated glutamine; by Photorhabdus PAU_02230. Residues 265–272 are G4 motif; that stretch reads ILFLNKKD. The GTP site is built by N269, K270, D272, L273, C325, A326, and T327. GDP-binding residues include N269, K270, and D272. The G5 motif stretch occupies residues 324–329; sequence TCATDT. Residues C325 and A326 each contribute to the GDP site. An ADP-ribosylcysteine; by pertussis toxin modification is found at C351.

This sequence belongs to the G-alpha family. G(i/o/t/z) subfamily. In terms of assembly, heterotrimeric G proteins are composed of 3 units; alpha, beta and gamma. The alpha subunit contains the guanine nucleotide binding site. GTP binding causes dissociation of the heterotrimer, liberating the individual subunits so that they can interact with downstream effector proteins. Forms a complex with CCDC88A/GIV and EGFR which leads to enhanced EGFR signaling and triggering of cell migration; ligand stimulation is required for recruitment of GNAI3 to the complex. Interacts (inactive GDP-bound form) with CCDC88A/GIV (via GBA motif); the interaction leads to activation of GNAI3. Interacts (inactive GDP-bound form) with CCDC88C/DAPLE (via GBA motif); the interaction leads to activation of GNAI3. Interacts (inactive GDP-bound form) with NUCB1 (via GBA motif) and NUCB2 (via GBA motif); the interaction leads to activation of GNAI3. Interacts (inactive GDP-bound form) with PLCD4 (via GBA motif); the interaction leads to activation of GNAI3. Interacts with INSR; the interaction is probably mediated by CCDC88A/GIV. Interacts with GPSM1. Interacts (GDP-bound form) with GPSM2 (via GoLoco domains). Does not interact with RGS2. Interacts with RGS8 and RGS10; this strongly enhances the intrinsic GTPase activity. Interacts with RGS16; this strongly enhances the intrinsic GTPase activity. Interacts with RGS12. Interacts (via active GTP- or inactive GDP-bound form) with RGS14. Interacts (via active GTP-bound form) with TRPC5 (via ANK repeats) in a homotetrameric ion channel; the interaction is direct and activates the channel activity. In terms of processing, (Microbial infection) Deamidated at Gln-204 by Photorhabdus asymbiotica toxin PAU_02230, blocking GTP hydrolysis of heterotrimeric GNAQ or GNA11 and G-alphai (GNAI1, GNAI2 or GNAI3) proteins, thereby activating RhoA.

The protein localises to the cytoplasm. The protein resides in the cell membrane. It localises to the cytoskeleton. It is found in the microtubule organizing center. Its subcellular location is the centrosome. Functionally, heterotrimeric guanine nucleotide-binding proteins (G proteins) function as transducers downstream of G protein-coupled receptors (GPCRs) in numerous signaling cascades. The alpha chain contains the guanine nucleotide binding site and alternates between an active, GTP-bound state and an inactive, GDP-bound state. Signaling by an activated GPCR promotes GDP release and GTP binding. The alpha subunit has a low GTPase activity that converts bound GTP to GDP, thereby terminating the signal. Both GDP release and GTP hydrolysis are modulated by numerous regulatory proteins. Signaling is mediated via effector proteins, such as adenylate cyclase. Inhibits adenylate cyclase activity, leading to decreased intracellular cAMP levels. Stimulates the activity of receptor-regulated K(+) channels. The active GTP-bound form prevents the association of RGS14 with centrosomes and is required for the translocation of RGS14 from the cytoplasm to the plasma membrane. May play a role in cell division. The active GTP-bound form activates the calcium permeant TRPC5 ion channels. This Homo sapiens (Human) protein is Guanine nucleotide-binding protein G(i) subunit alpha-3 (GNAI3).